Here is a 626-residue protein sequence, read N- to C-terminus: Kinesin-like protein Klp59C (626 aa).

The interval 1–183 (MDKLSIEQKI…VRSGTTNERI (183 aa)) is globular. Positions 68–155 (CSGGNAASAN…GKNEDPGNPN (88 aa)) are disordered. Polar residues predominate over residues 72-96 (NAASANQTASISPRSMKQRIATGSL). Residues 101-112 (ATAPPRQQTAPP) show a composition bias toward low complexity. A compositionally biased stretch (basic and acidic residues) spans 113–150 (VREDEVVHQAERMRKERERRREAQARTRLDREQGKNED). Residues 115 to 150 (EDEVVHQAERMRKERERRREAQARTRLDREQGKNED) adopt a coiled-coil conformation. The Kinesin motor domain maps to 187-521 (QIMVCVRKRP…LRYADRVKEL (335 aa)). 277–284 (GQTGSGKT) lines the ATP pocket. The disordered stretch occupies residues 557–608 (ASSTSMPGGGNQAQQHTNTANDLNRSQKPTSKPTYPTSGQQLVQRKGSSQRE).

The protein belongs to the TRAFAC class myosin-kinesin ATPase superfamily. Kinesin family. MCAK/KIF2 subfamily.

The protein localises to the chromosome. Its subcellular location is the centromere. It is found in the kinetochore. It localises to the cytoplasm. The protein resides in the cytoskeleton. The protein localises to the spindle pole. Required during anaphase to drive sister chromatid separation to actively depolymerize kinetochore microtubules at their kinetochore-associated plus ends, thereby contributing to chromatid mobility through a 'Pac-man' mechanism. This is Kinesin-like protein Klp59C (Klp59C) from Drosophila melanogaster (Fruit fly).